Reading from the N-terminus, the 148-residue chain is Large ribosomal subunit protein uL15 (148 aa).

Over residues 1-30 (MSTHKKKTRKLRGHVSHGHGRIGKHRKHPG) the composition is skewed to basic residues. The disordered stretch occupies residues 1 to 37 (MSTHKKKTRKLRGHVSHGHGRIGKHRKHPGGRGNAGG).

It belongs to the universal ribosomal protein uL15 family.

This Tenebrio molitor (Yellow mealworm beetle) protein is Large ribosomal subunit protein uL15 (RpL27A).